The chain runs to 523 residues: Heparanase (523 aa).

The first 18 residues, 1–18 (MLVLLLLVLLLAVPPRRT), serve as a signal peptide directing secretion. Heparan sulfate group contacts are provided by residues 42 to 44 (DAS), Thr77, and 137 to 141 (KKHKN). N-linked (GlcNAc...) asparagine glycans are attached at residues Asn141 and Asn196. The active-site Proton donor is Glu204. Residues 250-260 (QPRKHTQHLLR), His276, and Arg283 each bind heparan sulfate group. The interval 268–397 (KAIDSVTWHH…LLYKRLVGTR (130 aa)) is required for heterodimerization with the heparanase 8 kDa subunit. Residue Glu323 is the Nucleophile of the active site. Heparan sulfate group contacts are provided by residues 328–330 (YGG) and 369–371 (GSY). Cys417 and Cys522 form a disulfide bridge. Asn436 and Asn439 each carry an N-linked (GlcNAc...) asparagine glycan. The tract at residues 507 to 523 (FSYGFYVIRNAKAIACI) is required for transferring proheparanase to the Golgi apparatus, secretion and subsequent enzyme activity and for enhancement of PKB/AKT1 phosphorylation.

This sequence belongs to the glycosyl hydrolase 79 family. As to quaternary structure, heterodimer; the active enzyme is a heterodimer of the 60 kDa and 45 kDa proteolytic products. N-glycosylated. In terms of processing, proteolytically cleaved to produce a 60 kDa and a 45 kDa product.

It localises to the secreted. The enzyme catalyses endohydrolysis of (1-&gt;4)-beta-D-glycosidic bonds of heparan sulfate chains in heparan sulfate proteoglycan.. Endoglycosidase that cleaves heparan sulfate proteoglycans (HSPGs) into heparan sulfate side chains and core proteoglycans. Participates in extracellular matrix (ECM) degradation and remodeling. Selectively cleaves the linkage between a glucuronic acid unit and an N-sulfo glucosamine unit carrying either a 3-O-sulfo or a 6-O-sulfo group. Can also cleave the linkage between a glucuronic acid unit and an N-sulfo glucosamine unit carrying a 2-O-sulfo group, but not linkages between a glucuronic acid unit and a 2-O-sulfated iduronic acid moiety. Increases cell adhesion to the extracellular matrix (ECM), independent of its enzymatic activity. The protein is Heparanase (HPSE) of Gallus gallus (Chicken).